Reading from the N-terminus, the 1710-residue chain is Protein NETWORKED 1B (1710 aa).

Residues 13–92 form the NAB domain; it reads YSWWWDSHIP…ERYDHTTVEL (80 aa). Residues 113-159 form a disordered region; sequence EDSASSSSEPRTEADTEALQKDGTKSKRSFSQMNKLDGTSDSHEADS. Basic and acidic residues-rich tracts occupy residues 122–137 and 150–159; these read PRTE…DGTK and GTSDSHEADS. Coiled coils occupy residues 152 to 446, 474 to 546, 579 to 883, 974 to 1021, 1095 to 1259, and 1285 to 1336; these read SDSH…ELGA, QMLR…EIHC, VKKL…IDSL, HQCG…FESL, VSSL…LQEK, and LILE…LSAY. A disordered region spans residues 1409 to 1448; that stretch reads RLSRQITRSTSQKRRDRRKIENIQPDDQVTGESRQPRLRP. Positions 1559-1665 form a coiled coil; that stretch reads RRLSSLRISL…VLKLEDGTKS (107 aa).

This sequence belongs to the NET family. Expressed in root meristems and at very low levels throughout mature vasculature.

Functionally, plant-specific actin binding protein. May be part of a membrane-cytoskeletal adapter complex. The polypeptide is Protein NETWORKED 1B (Arabidopsis thaliana (Mouse-ear cress)).